Reading from the N-terminus, the 268-residue chain is Tryptophan synthase alpha chain (268 aa).

Residues E49 and D60 each act as proton acceptor in the active site.

The protein belongs to the TrpA family. In terms of assembly, tetramer of two alpha and two beta chains.

It carries out the reaction (1S,2R)-1-C-(indol-3-yl)glycerol 3-phosphate + L-serine = D-glyceraldehyde 3-phosphate + L-tryptophan + H2O. It participates in amino-acid biosynthesis; L-tryptophan biosynthesis; L-tryptophan from chorismate: step 5/5. Functionally, the alpha subunit is responsible for the aldol cleavage of indoleglycerol phosphate to indole and glyceraldehyde 3-phosphate. This Xylella fastidiosa (strain M23) protein is Tryptophan synthase alpha chain.